The following is a 327-amino-acid chain: GPI-linked NAD(P)(+)--arginine ADP-ribosyltransferase 1 (327 aa).

The N-terminal stretch at 1-22 (MQMPAMMSLLLVSVGLMEALQA) is a signal peptide. 2 disulfide bridges follow: Cys-53–Cys-277 and Cys-174–Cys-224. N-linked (GlcNAc...) asparagine glycosylation is present at Asn-65. Residues 73-273 (QVYADSWTLA…IYLRALGKHS (201 aa)) enclose the TR mART core domain. The NAD(+) site is built by Tyr-121 and Arg-179. Residues Arg-179 and Ser-202 contribute to the active site. Ser-233 provides a ligand contact to NAD(+). Glu-240 is an active-site residue. The N-linked (GlcNAc...) asparagine glycan is linked to Asn-253. Ser-295 carries GPI-anchor amidated serine lipidation. The propeptide at 296 to 327 (AMGQSPLSAVWSLLLLLWFLVVRAFPDGPGLL) is removed in mature form.

Belongs to the Arg-specific ADP-ribosyltransferase family.

The protein localises to the sarcoplasmic reticulum membrane. The enzyme catalyses L-arginyl-[protein] + NAD(+) = N(omega)-(ADP-D-ribosyl)-L-arginyl-[protein] + nicotinamide + H(+). Its function is as follows. Has ADP-ribosyltransferase activity toward GLP1R. In Homo sapiens (Human), this protein is GPI-linked NAD(P)(+)--arginine ADP-ribosyltransferase 1 (ART1).